The sequence spans 465 residues: Cysteine--tRNA ligase (465 aa).

A Zn(2+)-binding site is contributed by cysteine 30. Residues isoleucine 32–histidine 42 carry the 'HIGH' region motif. Zn(2+)-binding residues include cysteine 214, histidine 239, and glutamate 243. A 'KMSKS' region motif is present at residues lysine 271–serine 275. Lysine 274 lines the ATP pocket.

The protein belongs to the class-I aminoacyl-tRNA synthetase family. In terms of assembly, monomer. It depends on Zn(2+) as a cofactor.

It is found in the cytoplasm. The enzyme catalyses tRNA(Cys) + L-cysteine + ATP = L-cysteinyl-tRNA(Cys) + AMP + diphosphate. The protein is Cysteine--tRNA ligase of Burkholderia ambifaria (strain MC40-6).